A 314-amino-acid polypeptide reads, in one-letter code: Methionyl-tRNA formyltransferase (314 aa).

Residue 111-114 participates in (6S)-5,6,7,8-tetrahydrofolate binding; it reads SLLP.

The protein belongs to the Fmt family.

It catalyses the reaction L-methionyl-tRNA(fMet) + (6R)-10-formyltetrahydrofolate = N-formyl-L-methionyl-tRNA(fMet) + (6S)-5,6,7,8-tetrahydrofolate + H(+). Functionally, attaches a formyl group to the free amino group of methionyl-tRNA(fMet). The formyl group appears to play a dual role in the initiator identity of N-formylmethionyl-tRNA by promoting its recognition by IF2 and preventing the misappropriation of this tRNA by the elongation apparatus. This Coxiella burnetii (strain CbuK_Q154) (Coxiella burnetii (strain Q154)) protein is Methionyl-tRNA formyltransferase.